The chain runs to 203 residues: UPF0637 protein EF_3078 (203 aa).

Belongs to the UPF0637 family.

The polypeptide is UPF0637 protein EF_3078 (Enterococcus faecalis (strain ATCC 700802 / V583)).